We begin with the raw amino-acid sequence, 353 residues long: MLYSLLYGYFNINLFQYLTFRAGLGFFIAFFLTLFLMPKFILWAKAKKANQPISSFVPSHQNKKDTPTMGGIVFVFATIVASVLCASLSNLYVLLGIIVLVGFSFVGFRDDYTKINQQNNAGMSAKMKFGMLFILSLIVSVLLSLKGLDTFLYAPFLKNPLFEMPTMLAVGFWVLVFLSTSNAVNLTDGLDGLASVPSIFTLLSLSIFVYVAGNAEFSKYLLYPKVIDVGELFVISLALVGSLFGFLWYNCNPASVFMGDSGSLAIGGFIAYNAIVSHNEILLVLMGSIFVIETLSVILQVGSYKTRKKRLFLMAPIHHHFEQKGWAENKVIVRFWIISMLSNLVALLSLKVC.

Helical transmembrane passes span 24 to 44 (LGFF…ILWA), 66 to 86 (TPTM…VLCA), 88 to 108 (LSNL…FVGF), 129 to 149 (FGML…KGLD), 160 to 180 (PLFE…FLST), 192 to 212 (GLAS…VYVA), 229 to 249 (VGEL…FLWY), 256 to 276 (VFMG…NAIV), 281 to 301 (ILLV…ILQV), and 330 to 350 (KVIV…LLSL).

Belongs to the glycosyltransferase 4 family. MraY subfamily. The cofactor is Mg(2+).

It localises to the cell inner membrane. The enzyme catalyses UDP-N-acetyl-alpha-D-muramoyl-L-alanyl-gamma-D-glutamyl-meso-2,6-diaminopimeloyl-D-alanyl-D-alanine + di-trans,octa-cis-undecaprenyl phosphate = di-trans,octa-cis-undecaprenyl diphospho-N-acetyl-alpha-D-muramoyl-L-alanyl-D-glutamyl-meso-2,6-diaminopimeloyl-D-alanyl-D-alanine + UMP. Its pathway is cell wall biogenesis; peptidoglycan biosynthesis. In terms of biological role, catalyzes the initial step of the lipid cycle reactions in the biosynthesis of the cell wall peptidoglycan: transfers peptidoglycan precursor phospho-MurNAc-pentapeptide from UDP-MurNAc-pentapeptide onto the lipid carrier undecaprenyl phosphate, yielding undecaprenyl-pyrophosphoryl-MurNAc-pentapeptide, known as lipid I. In Helicobacter pylori (strain J99 / ATCC 700824) (Campylobacter pylori J99), this protein is Phospho-N-acetylmuramoyl-pentapeptide-transferase.